The primary structure comprises 125 residues: Cu-Zn superoxide dismutase-like protein (125 aa).

A disulfide bond links C52 and C102.

This sequence belongs to the Cu-Zn superoxide dismutase family.

The protein resides in the host cytoplasm. Virion protein with no enzymatic activity. This Mus musculus (Mouse) protein is Cu-Zn superoxide dismutase-like protein.